A 961-amino-acid polypeptide reads, in one-letter code: Phosphofurin acidic cluster sorting protein 1 (961 aa).

Positions Met1–Ser19 are enriched in gly residues. Disordered stretches follow at residues Met1–Thr70 and Val76–Ala95. N-acetylalanine is present on Ala2. Positions Gln20–Gln34 are enriched in low complexity. Ser28 is modified (phosphoserine). A compositionally biased stretch (pro residues) spans Gln35–Pro46. Thr44 carries the post-translational modification Phosphothreonine. Residues Ala51–Thr70 show a composition bias toward low complexity. Tyr249 is subject to Phosphotyrosine. Over residues Gly260–Asp271 the composition is skewed to basic and acidic residues. 2 disordered regions span residues Gly260 to Gln297 and Asn375 to Thr426. Residues Asn274–Asp291 show a composition bias toward acidic residues. The stretch at His351–Asn375 forms a coiled coil. A phosphoserine mark is found at Ser377 and Ser379. The segment covering Met404 to Thr426 has biased composition (polar residues). Residues Ser428 and Ser493 each carry the phosphoserine modification. Disordered regions lie at residues Glu475 to Gln540 and Ser758 to Ser802. Residue Thr502 is modified to Phosphothreonine. Ser517, Ser526, Ser527, Ser529, and Ser532 each carry phosphoserine. Positions Ser768 to Ser802 are enriched in low complexity.

The protein belongs to the PACS family. Associates with AP-1 and AP-3 but not with AP-2 complexes. Interacts with FURIN. Forms a ternary complex with FURIN and AP-1. Interacts with PKD2 (via acidic region). Interacts with SORL1. Interacts with WDR37.

The protein resides in the golgi apparatus. It is found in the trans-Golgi network. Its function is as follows. Coat protein that is involved in the localization of trans-Golgi network (TGN) membrane proteins that contain acidic cluster sorting motifs. Controls the endosome-to-Golgi trafficking of furin and mannose-6-phosphate receptor by connecting the acidic-cluster-containing cytoplasmic domain of these molecules with the adapter-protein complex-1 (AP-1) of endosomal clathrin-coated membrane pits. Required for normal ER Ca2+ handling in lymphocytes. Together with WDR37, it plays an essential role in lymphocyte development, quiescence and survival. Required for stabilizing peripheral lymphocyte populations. This is Phosphofurin acidic cluster sorting protein 1 (Pacs1) from Mus musculus (Mouse).